A 1230-amino-acid polypeptide reads, in one-letter code: Serine/threonine-protein kinase CST20 (1230 aa).

Positions Met-1 to Ser-20 are enriched in polar residues. Disordered stretches follow at residues Met-1–Asn-384 and Ser-413–Glu-470. Composition is skewed to low complexity over residues Asn-57 to Ser-70 and Ser-96 to Ser-125. Positions His-150–Tyr-161 are enriched in basic and acidic residues. Composition is skewed to polar residues over residues Asp-175–Ser-197, Thr-207–Ala-224, and Pro-237–Asp-246. Positions Ser-248–Val-257 are enriched in low complexity. Polar residues-rich tracts occupy residues Ser-262 to Ser-277 and Asp-311 to Gly-330. Low complexity-rich tracts occupy residues Asn-349–Thr-381 and Lys-439–Ser-468. The region spanning Ile-475–Gly-488 is the CRIB domain. Disordered regions lie at residues Phe-545 to Asp-831 and Leu-867 to Ala-919. Residues Asn-550–Asn-561 show a composition bias toward polar residues. Positions Ser-570–Ala-581 are enriched in gly residues. Positions Ile-604–Lys-613 are enriched in polar residues. Basic and acidic residues predominate over residues Thr-614 to Asn-628. Polar residues predominate over residues Ala-629–Gln-642. Low complexity-rich tracts occupy residues Pro-670–Asp-683, Ser-696–Leu-710, and Ser-736–Ser-749. The span at Gln-750–Ala-761 shows a compositional bias: polar residues. The segment covering Ala-789–Pro-807 has biased composition (pro residues). The segment covering Leu-811–Ser-826 has biased composition (polar residues). The segment covering Leu-867–Arg-876 has biased composition (basic and acidic residues). The span at Gln-877–Ser-892 shows a compositional bias: polar residues. One can recognise a Protein kinase domain in the interval Tyr-953–Ile-1205. ATP is bound by residues Ile-959–Val-967 and Lys-983. Asp-1073 serves as the catalytic Proton acceptor.

Belongs to the protein kinase superfamily. STE Ser/Thr protein kinase family. STE20 subfamily.

It localises to the cytoplasm. It is found in the nucleus. It carries out the reaction L-seryl-[protein] + ATP = O-phospho-L-seryl-[protein] + ADP + H(+). The catalysed reaction is L-threonyl-[protein] + ATP = O-phospho-L-threonyl-[protein] + ADP + H(+). Functionally, MAP4K component of the MAPK pathway required for the mating pheromone response, and the regulation of cell polarity and cell cycle. Phosphorylates histone H2B to form H2BS10ph. Required for hyphal formation and virulence. This Candida albicans (Yeast) protein is Serine/threonine-protein kinase CST20 (CST20).